Here is a 610-residue protein sequence, read N- to C-terminus: Methionine--tRNA ligase (610 aa).

Residues 12–22 carry the 'HIGH' region motif; sequence PYANGPRHIGH. Cys-144, Cys-147, Cys-157, and Cys-160 together coordinate Zn(2+). The short motif at 348–352 is the 'KMSKS' region element; that stretch reads KFSSS. Ser-351 lines the ATP pocket.

It belongs to the class-I aminoacyl-tRNA synthetase family. MetG type 1 subfamily. Monomer. Requires Zn(2+) as cofactor.

It localises to the cytoplasm. It carries out the reaction tRNA(Met) + L-methionine + ATP = L-methionyl-tRNA(Met) + AMP + diphosphate. Its function is as follows. Is required not only for elongation of protein synthesis but also for the initiation of all mRNA translation through initiator tRNA(fMet) aminoacylation. This Corynebacterium diphtheriae (strain ATCC 700971 / NCTC 13129 / Biotype gravis) protein is Methionine--tRNA ligase.